The chain runs to 558 residues: uncharacterized protein (558 aa).

12 helical membrane-spanning segments follow: residues 21–41 (IFCF…LPIA), 69–89 (FLDA…STVV), 100–120 (IVLA…AFLA), 160–180 (IIFL…LFYF), 220–240 (AFQA…IDLI), 251–271 (GLGI…GIGY), 303–323 (VITN…VEFI), 386–406 (VFPV…AMFI), 413–433 (TAGG…VAKF), 454–474 (AFLV…LLPL), 479–499 (PVSF…VGLS), and 519–539 (ALCL…LTFV).

It belongs to the TrkH potassium transport family.

It is found in the cell membrane. This is an uncharacterized protein from Mycoplasma genitalium (strain ATCC 33530 / DSM 19775 / NCTC 10195 / G37) (Mycoplasmoides genitalium).